The chain runs to 266 residues: MKEELFKEKSRYITGFVLIIVADLILYADNLLLFWAVLGGIYAVGFSEALRLFQVKASFSLYLILVLSWVAAYFNGRPIECALISAMVMASVIAYQKAHHSEAILPFLYPGVGFFALFGVYKDFGAVAIIWLLVVVVASDVGAFFGGKLLGKTPFTPTSPNKTLEGALIGVVLASVLGSFVGMGKLSGGFFMALFFSFLIALVAVFGDLYESYLKRKVGIKDSGKILPGHGGVLDRLDSMLFGALGLHALLYFLEIWKETAVFLGD.

The next 8 membrane-spanning stretches (helical) occupy residues 16–36 (FVLI…LFWA), 52–72 (LFQV…WVAA), 78–98 (PIEC…YQKA), 101–121 (SEAI…FGVY), 125–145 (GAVA…GAFF), 164–184 (LEGA…VGMG), 186–206 (LSGG…VAVF), and 237–257 (LDSM…LEIW).

The protein belongs to the CDS family.

The protein localises to the cell inner membrane. The enzyme catalyses a 1,2-diacyl-sn-glycero-3-phosphate + CTP + H(+) = a CDP-1,2-diacyl-sn-glycerol + diphosphate. Its pathway is phospholipid metabolism; CDP-diacylglycerol biosynthesis; CDP-diacylglycerol from sn-glycerol 3-phosphate: step 3/3. This Helicobacter pylori (strain ATCC 700392 / 26695) (Campylobacter pylori) protein is Phosphatidate cytidylyltransferase (cdsA).